The primary structure comprises 251 residues: Lactose phosphotransferase system repressor (251 aa).

The region spanning 3–58 (KEERLEEITKLINKRGTIRVTEVVERLKVSDMTVRRDLTELEGLGVLTRIHGGARS) is the HTH deoR-type domain. The segment at residues 20–39 (IRVTEVVERLKVSDMTVRRD) is a DNA-binding region (H-T-H motif).

Its function is as follows. Repressor of the lactose catabolism operon. Galactose-6-phosphate is the inducer. The chain is Lactose phosphotransferase system repressor (lacR) from Streptococcus mutans serotype c (strain ATCC 700610 / UA159).